Here is a 149-residue protein sequence, read N- to C-terminus: NPC intracellular cholesterol transporter 2 (149 aa).

Residues M1–A19 form the signal peptide. 3 disulfides stabilise this stretch: C27–C140, C42–C47, and C93–C99. The N-linked (GlcNAc...) asparagine glycan is linked to N58. Residue K116 is modified to N6-acetyllysine.

It belongs to the NPC2 family. In terms of assembly, interacts with NPC1 (via the second lumenal domain) in a cholestrol-dependent manner. Interacts with NUS1/NgBR, the interaction stabilizes NCP2 and regulates cholesterol trafficking. Interacts with DHDDS. Interacts with NEDD4L (via C2 domain). Interacts with NPC1L1. In terms of processing, N-glycosylated. Found in the epididymal fluid as a 19 kDa glycoprotein that is processed during its passage through the epididymis into a 16 kDa protein. As to expression, found in the fluid from the distal caput to cauda epididymis, not detected in the rete testis and the proximal and middle caput epididymal fluids (at protein level).

Its subcellular location is the secreted. It is found in the endoplasmic reticulum. It localises to the lysosome. The enzyme catalyses cholesterol(in) = cholesterol(out). Its function is as follows. Intracellular cholesterol transporter which acts in concert with NPC1 and plays an important role in the egress of cholesterol from the lysosomal compartment. Unesterified cholesterol that has been released from LDLs in the lumen of the late endosomes/lysosomes is transferred by NPC2 to the cholesterol-binding pocket in the N-terminal domain of NPC1. May bind and mobilize cholesterol that is associated with membranes. NPC2 binds cholesterol with a 1:1 stoichiometry. Can bind a variety of sterols, including lathosterol, desmosterol and the plant sterols stigmasterol and beta-sitosterol. The secreted form of NCP2 regulates biliary cholesterol secretion via stimulation of ABCG5/ABCG8-mediated cholesterol transport. The sequence is that of NPC intracellular cholesterol transporter 2 from Sus scrofa (Pig).